Reading from the N-terminus, the 75-residue chain is Kappa-conotoxin RIIIK (75 aa).

A signal peptide spans 1–19 (MSKLGVLLTICLLLFPLTA). The propeptide occupies 20 to 50 (LPMDGDQPVDRLAERMQDNISSEQHTFFEKR). 4-hydroxyproline is present on residues Pro52, Pro63, Pro65, and Pro71. Cystine bridges form between Cys54–Cys67, Cys55–Cys72, and Cys62–Cys73. Thr74 carries the threonine amide modification.

Belongs to the conotoxin M superfamily. Expressed by the venom duct.

The protein localises to the secreted. Its function is as follows. Kappa-conotoxins inhibits voltage-gated potassium channels (Kv). This synthetic toxin reversibly inhibits the insect potassium channel Shaker K+, the teleost homolog TSha1 and the mammalian Kv1.2/KCNA2 channel. Interacts with the pore region of the insect channel, in a state-dependent manner. Causes seizure when intracerebrovascularly injected into mice. Is also toxic when intrathecally injected into mice, but shows no visible effects by intraperitoneal injection. Shows protective effects on cardiac tissue when administered after an ischemic event. The protein is Kappa-conotoxin RIIIK of Conus radiatus (Rayed cone).